A 114-amino-acid polypeptide reads, in one-letter code: uncharacterized protein (114 aa).

Positions 6–114 (IFGKIIRREI…GGRSLAWPPG (109 aa)) constitute an HIT domain. A Histidine triad motif motif is present at residues 98–102 (HLHIH).

This is an uncharacterized protein from Synechococcus elongatus (strain ATCC 33912 / PCC 7942 / FACHB-805) (Anacystis nidulans R2).